The primary structure comprises 361 residues: tRNA-specific 2-thiouridylase MnmA (361 aa).

ATP contacts are provided by residues 11-18 (GMSGGVDS) and Met-37. The active-site Nucleophile is Cys-106. The cysteines at positions 106 and 202 are disulfide-linked. Gly-130 lines the ATP pocket. The interaction with tRNA stretch occupies residues 152 to 154 (KDQ). The active-site Cysteine persulfide intermediate is the Cys-202. Positions 308–309 (RY) are interaction with tRNA.

It belongs to the MnmA/TRMU family.

The protein resides in the cytoplasm. It catalyses the reaction S-sulfanyl-L-cysteinyl-[protein] + uridine(34) in tRNA + AH2 + ATP = 2-thiouridine(34) in tRNA + L-cysteinyl-[protein] + A + AMP + diphosphate + H(+). Its function is as follows. Catalyzes the 2-thiolation of uridine at the wobble position (U34) of tRNA, leading to the formation of s(2)U34. The sequence is that of tRNA-specific 2-thiouridylase MnmA from Clostridium botulinum (strain Alaska E43 / Type E3).